A 194-amino-acid chain; its full sequence is Imidazoleglycerol-phosphate dehydratase (194 aa).

This sequence belongs to the imidazoleglycerol-phosphate dehydratase family.

It localises to the cytoplasm. The enzyme catalyses D-erythro-1-(imidazol-4-yl)glycerol 3-phosphate = 3-(imidazol-4-yl)-2-oxopropyl phosphate + H2O. It functions in the pathway amino-acid biosynthesis; L-histidine biosynthesis; L-histidine from 5-phospho-alpha-D-ribose 1-diphosphate: step 6/9. The protein is Imidazoleglycerol-phosphate dehydratase of Thermoanaerobacter pseudethanolicus (strain ATCC 33223 / 39E) (Clostridium thermohydrosulfuricum).